The chain runs to 432 residues: Glutamate-1-semialdehyde 2,1-aminomutase (432 aa).

Lysine 272 bears the N6-(pyridoxal phosphate)lysine mark.

This sequence belongs to the class-III pyridoxal-phosphate-dependent aminotransferase family. HemL subfamily. Homodimer. Pyridoxal 5'-phosphate is required as a cofactor.

It localises to the cytoplasm. The enzyme catalyses (S)-4-amino-5-oxopentanoate = 5-aminolevulinate. The protein operates within porphyrin-containing compound metabolism; protoporphyrin-IX biosynthesis; 5-aminolevulinate from L-glutamyl-tRNA(Glu): step 2/2. It functions in the pathway porphyrin-containing compound metabolism; chlorophyll biosynthesis. In Cyanothece sp. (strain PCC 7425 / ATCC 29141), this protein is Glutamate-1-semialdehyde 2,1-aminomutase.